The following is a 192-amino-acid chain: Riboflavin kinase (192 aa).

Mg(2+) is bound by residues Thr-47 and Asn-49. Catalysis depends on Glu-129, which acts as the Nucleophile.

This sequence belongs to the flavokinase family. The cofactor is Zn(2+). Requires Mg(2+) as cofactor.

It catalyses the reaction riboflavin + ATP = FMN + ADP + H(+). Its pathway is cofactor biosynthesis; FMN biosynthesis; FMN from riboflavin (ATP route): step 1/1. In terms of biological role, catalyzes the phosphorylation of riboflavin (vitamin B2) to form flavin mononucleotide (FMN) coenzyme. This Yarrowia lipolytica (strain CLIB 122 / E 150) (Yeast) protein is Riboflavin kinase (FMN1).